The following is a 488-amino-acid chain: ATP synthase subunit beta (488 aa).

Position 164-171 (164-171 (GGAGVGKT)) interacts with ATP.

It belongs to the ATPase alpha/beta chains family. As to quaternary structure, F-type ATPases have 2 components, CF(1) - the catalytic core - and CF(0) - the membrane proton channel. CF(1) has five subunits: alpha(3), beta(3), gamma(1), delta(1), epsilon(1). CF(0) has four main subunits: a(1), b(1), b'(1) and c(9-12).

It is found in the cellular thylakoid membrane. It catalyses the reaction ATP + H2O + 4 H(+)(in) = ADP + phosphate + 5 H(+)(out). Functionally, produces ATP from ADP in the presence of a proton gradient across the membrane. The catalytic sites are hosted primarily by the beta subunits. This Prochlorococcus marinus (strain MIT 9303) protein is ATP synthase subunit beta.